Consider the following 293-residue polypeptide: Nucleotide-binding protein BBR47_52620 (293 aa).

17–24 (GMSGAGKT) is an ATP binding site. 68-71 (DLRG) contributes to the GTP binding site.

It belongs to the RapZ-like family.

In terms of biological role, displays ATPase and GTPase activities. The chain is Nucleotide-binding protein BBR47_52620 from Brevibacillus brevis (strain 47 / JCM 6285 / NBRC 100599).